A 166-amino-acid chain; its full sequence is Regulatory protein RecX (166 aa).

It belongs to the RecX family.

It is found in the cytoplasm. Its function is as follows. Modulates RecA activity. The sequence is that of Regulatory protein RecX from Salmonella agona (strain SL483).